The sequence spans 2839 residues: PDZ domain-containing protein 2 (2839 aa).

The PDZ 1 domain occupies 85 to 182 (LSFGNIPVFG…LIMLRRFKHK (98 aa)). Residues 185-318 (STYNGNSSNS…RFSKGGKTDF (134 aa)) form a disordered region. The span at 189–202 (GNSSNSSEPGETPT) shows a compositional bias: low complexity. A compositionally biased stretch (basic and acidic residues) spans 280-296 (HLERSEVDRGTEHRIPK). Residues 334–419 (KMELLKESDG…MVQLVVASKE (86 aa)) enclose the PDZ 2 domain. Polar residues predominate over residues 437–447 (TSSVEDVSSWT). Residues 437–501 (TSSVEDVSSW…PKQGSNKIKL (65 aa)) are disordered. A compositionally biased stretch (acidic residues) spans 448 to 461 (DNEDQEADGEEDEG). Phosphoserine is present on S568. Residues 586–672 (IIGLYKEKGK…GLFVLTVRTK (87 aa)) enclose the PDZ 3 domain. Over residues 678-697 (LTPCSTPTHMSRSASPNFNT) the composition is skewed to polar residues. Residues 678-723 (LTPCSTPTHMSRSASPNFNTSGGASAGGSDEGSSSSLGRKTPGPKD) are disordered. Residues 728–813 (EVTLNKEPRV…GPVRLVIGRH (86 aa)) enclose the PDZ 4 domain. Composition is skewed to polar residues over residues 832–843 (YQESKEANSSPG) and 894–908 (GCSTSEEGSLPPSTS). Disordered regions lie at residues 832-852 (YQESKEANSSPGLGTPLKSPS) and 879-921 (DFMV…ANSL). A phosphoserine mark is found at S944 and S948. 14 disordered regions span residues 984 to 1033 (SLPG…ISAP), 1062 to 1155 (SAEA…PCDL), 1216 to 1493 (KAAS…GAPA), 1530 to 1620 (FHED…LPTQ), 1638 to 1712 (PRES…SPLS), 1809 to 1865 (NQGT…DLSK), 1892 to 1976 (GKAK…SVSD), 2009 to 2079 (PDRG…GNIM), 2135 to 2166 (QVAESSTSHPSSLPSHASQAEQEMSRSFSMAK), 2178 to 2211 (IRKAEYSQGKSSLMSDSRGVPRNSIPGGPSGEDH), 2232 to 2251 (HFGREGHPPHSLGRSRDSQV), 2353 to 2383 (AKSGASPFLSVSSKPPIGRRSSGSIVSGSLG), 2426 to 2481 (SRQN…SRSK), and 2516 to 2564 (ITPR…GEAA). The segment covering 1012–1022 (MDVHNQEERPR) has biased composition (basic and acidic residues). 7 stretches are compositionally biased toward polar residues: residues 1092 to 1111 (RTDTQSPTNTGSPSSPQQKS), 1138 to 1147 (SGSQTVNLTG), 1221 to 1236 (LGQQPMTELDSSSDLI), 1250 to 1269 (SKTSVDTGQVSRPENPSQPA), 1305 to 1315 (TRSASETSTPH), 1384 to 1401 (SVSSRAPQASLSMLPSTD), and 1440 to 1453 (RSPSSQTGDSGSQE). Residues 1662 to 1672 (SSQPSSLLEMS) are compositionally biased toward low complexity. Over residues 1698 to 1711 (EVTSASSAMENSPL) the composition is skewed to polar residues. A Phosphoserine modification is found at S1850. Residues 1919 to 1931 (SPQTSHKTLSKAV) show a composition bias toward polar residues. The span at 1936 to 1945 (HVADHEDPDR) shows a compositional bias: basic and acidic residues. A compositionally biased stretch (low complexity) spans 2139–2152 (SSTSHPSSLPSHAS). Positions 2370-2383 (GRRSSGSIVSGSLG) are enriched in low complexity. Polar residues-rich tracts occupy residues 2426–2437 (SRQNPPETSSKG), 2470–2480 (RHTQPSPVSRS), and 2546–2559 (PKTSAAETPSSASD). The 85-residue stretch at 2622–2706 (FIVLNRKEGS…HKDALVVIKK (85 aa)) folds into the PDZ 5 domain. The interval 2709–2729 (DQPRPSARQEPPTANGKGLLS) is disordered. Residues 2750–2835 (CVEVLKTSAG…GPVQLLIRKH (86 aa)) enclose the PDZ 6 domain.

In terms of assembly, interacts with SCN10A, CTNND2 and PKP4. A secreted form is produced by caspase-mediated proteolytic cleavage. In terms of tissue distribution, isoform 2 is expressed (at protein level) in prostate and many prostate tumors.

Its subcellular location is the nucleus. The protein resides in the cytoplasm. The protein localises to the endoplasmic reticulum. It localises to the secreted. This is PDZ domain-containing protein 2 (PDZD2) from Homo sapiens (Human).